The chain runs to 328 residues: Cytochrome f (328 aa).

An N-terminal signal peptide occupies residues 1 to 44; sequence MRTPDFSAIWQASKQLTARIILLAFATFALYVFHDLAFPQGAAA. 4 residues coordinate heme: Tyr45, Cys66, Cys69, and His70. The chain crosses the membrane as a helical span at residues 294–314; that stretch reads IKGLMVFLAGIMLAQILLVIK.

Belongs to the cytochrome f family. The 4 large subunits of the cytochrome b6-f complex are cytochrome b6, subunit IV (17 kDa polypeptide, PetD), cytochrome f and the Rieske protein, while the 4 small subunits are PetG, PetL, PetM and PetN. The complex functions as a dimer. It depends on heme as a cofactor.

Its subcellular location is the cellular thylakoid membrane. Functionally, component of the cytochrome b6-f complex, which mediates electron transfer between photosystem II (PSII) and photosystem I (PSI), cyclic electron flow around PSI, and state transitions. This Rippkaea orientalis (strain PCC 8801 / RF-1) (Cyanothece sp. (strain PCC 8801)) protein is Cytochrome f.